The following is a 659-amino-acid chain: Putative pentatricopeptide repeat-containing protein At3g16890, mitochondrial (659 aa).

The N-terminal 32 residues, 1-32 (MRGFASSASRIATAAAASKSLNASTSVNPKLS), are a transit peptide targeting the mitochondrion. PPR repeat units lie at residues 109 to 143 (DQSLKSVLGNALFRKGPLLLSMELLKEIRDSGYRI), 144 to 178 (SDELMCVLIGSWGRLGLAKYCNDVFAQISFLGMKP), 179 to 213 (STRLYNAVIDALVKSNSLDLAYLKFQQMRSDGCKP), 214 to 248 (DRFTYNILIHGVCKKGVVDEAIRLVKQMEQEGNRP), 249 to 283 (NVFTYTILIDGFLIAGRVDEALKQLEMMRVRKLNP), 284 to 318 (NEATIRTFVHGIFRCLPPCKAFEVLVGFMEKDSNL), 319 to 353 (QRVGYDAVLYCLSNNSMAKETGQFLRKIGERGYIP), 354 to 388 (DSSTFNAAMSCLLKGHDLVETCRIFDGFVSRGVKP), 389 to 423 (GFNGYLVLVQALLNAQRFSEGDRYLKQMGVDGLLS), 424 to 458 (SVYSYNAVIDCLCKARRIENAAMFLTEMQDRGISP), 459 to 493 (NLVTFNTFLSGYSVRGDVKKVHGVLEKLLVHGFKP), 494 to 528 (DVITFSLIINCLCRAKEIKDAFDCFKEMLEWGIEP), 529 to 563 (NEITYNILIRSCCSTGDTDRSVKLFAKMKENGLSP), 564 to 598 (DLYAYNATIQSFCKMRKVKKAEELLKTMLRIGLKP), and 599 to 633 (DNFTYSTLIKALSESGRESEAREMFSSIERHGCVP).

Belongs to the PPR family. P subfamily.

Its subcellular location is the mitochondrion. Its function is as follows. Required for the ubiquinol-cytochrome c oxidoreductase activity of mitochondrial complex III. The polypeptide is Putative pentatricopeptide repeat-containing protein At3g16890, mitochondrial (PPR40) (Arabidopsis thaliana (Mouse-ear cress)).